Here is a 1063-residue protein sequence, read N- to C-terminus: Coiled-coil domain-containing protein 187 (1063 aa).

Disordered regions lie at residues 1–41 (MPTL…AADW), 62–184 (RWPG…SRLH), 219–278 (RVEA…KDED), 300–319 (PPPV…PALT), 392–484 (RKGG…ERLG), 496–539 (GQAC…ATQP), and 551–658 (WEDP…LEEK). The span at 111–124 (SSVSSGRLSCSSGG) shows a compositional bias: low complexity. Basic and acidic residues predominate over residues 146 to 160 (RKSDARLEQLRDKIR). Over residues 163 to 181 (AWQQGSCASLGTSAPSSAS) the composition is skewed to polar residues. Over residues 219 to 233 (RVEAKASHGQGRELS) the composition is skewed to basic and acidic residues. 2 stretches are compositionally biased toward basic and acidic residues: residues 431–442 (TERKHSSLERAR) and 472–484 (SFQR…ERLG). Positions 508 to 517 (QRQGPSSQRP) are enriched in low complexity. A coiled-coil region spans residues 816-851 (HLRHKQAQLQALETTAKVLKQRVDSLTAKLQGAEAL). The interval 1010–1030 (PRSCGKGDPADRPWAGWSGGR) is disordered.

The chain is Coiled-coil domain-containing protein 187 from Homo sapiens (Human).